Consider the following 70-residue polypeptide: Brevinin-1Vb (70 aa).

The N-terminal stretch at 1-22 is a signal peptide; it reads MFTLKKSLLLLFFLGTINLSLC. The propeptide occupies 23–44; that stretch reads EEERNAEEERRDEPDEMNVEVE. Cys-64 and Cys-70 are disulfide-bonded.

Expressed by the skin glands.

It is found in the secreted. Functionally, antimicrobial peptide. The protein is Brevinin-1Vb of Odorrana versabilis (Chinese bamboo leaf odorous frog).